The following is a 1822-amino-acid chain: Integrin beta-4 (1822 aa).

The signal sequence occupies residues 1–27 (MAGPRPSPWARLLLAALISVSLSGTLA). At 28-710 (NRCKKAPVKS…HKKKDCPPGS (683 aa)) the chain is on the extracellular side. One can recognise a PSI domain in the interval 29–73 (RCKKAPVKSCTECVRVDKDCAYCTDEMFRDRRCNTQAELLAAGCQ). Cystine bridges form between Cys-30–Cys-48, Cys-38–Cys-455, Cys-41–Cys-61, Cys-51–Cys-72, Cys-245–Cys-288, Cys-457–Cys-476, Cys-468–Cys-479, and Cys-481–Cys-490. Residues 131 to 329 (DLYILMDFSN…IPIFAVTNYS (199 aa)) enclose the VWFA domain. Ser-139 and Ser-141 together coordinate Mg(2+). The Ca(2+) site is built by Ser-141, Asp-144, Asp-145, and Asp-176. The involved in NRG1- and IGF1-binding stretch occupies residues 194–199 (WPNSDP). Asn-228, Asp-230, Pro-232, and Glu-233 together coordinate Ca(2+). Glu-233 provides a ligand contact to Mg(2+). The N-linked (GlcNAc...) asparagine glycan is linked to Asn-327. Glu-350 lines the Ca(2+) pocket. 4 I-EGF domains span residues 457-491 (CELQ…QTCN), 492-537 (CSTG…QFCE), 538-574 (YDNF…PSCD), and 575-615 (CPLS…TICE). An N-linked (GlcNAc...) asparagine glycan is attached at Asn-491. 11 disulfide bridges follow: Cys-492–Cys-520, Cys-503–Cys-518, Cys-512–Cys-523, Cys-525–Cys-536, Cys-543–Cys-557, Cys-551–Cys-562, Cys-564–Cys-573, Cys-575–Cys-598, Cys-582–Cys-596, Cys-590–Cys-601, and Cys-603–Cys-614. N-linked (GlcNAc...) asparagine glycosylation is present at Asn-579. N-linked (GlcNAc...) asparagine glycosylation occurs at Asn-617. 4 cysteine pairs are disulfide-bonded: Cys-626-Cys-671, Cys-632-Cys-651, Cys-635-Cys-648, and Cys-680-Cys-706. Residue Asn-695 is glycosylated (N-linked (GlcNAc...) asparagine). A helical transmembrane segment spans residues 711-733 (FWWLIPLLLLLLPLLALLLLLCW). Residues 732-749 (CWKYCACCKACLALLPCC) are palmitoylated on several cysteines. The Cytoplasmic portion of the chain corresponds to 734–1822 (KYCACCKACL…THMDQQFFQT (1089 aa)). A phosphoserine mark is found at Ser-771, Ser-1069, and Ser-1119. The region spanning 979 to 1084 (VNITIIKEQA…QVRRFHVQLS (106 aa)) is the Calx-beta domain. Residues 1113 to 1140 (TSQMLSSQPPPHGDLGAPQNPNAKAAGS) form a disordered region. 2 Fibronectin type-III domains span residues 1129 to 1218 (APQN…THQE) and 1222 to 1321 (EPGR…TQPK). The segment at 1400 to 1444 (LSASSGRSSDAEAPHGPPDDGGAGGKGGSLPRSATPGPPGEHLVN) is disordered. Over residues 1418 to 1427 (DDGGAGGKGG) the composition is skewed to gly residues. 3 positions are modified to phosphoserine: Ser-1454, Ser-1457, and Ser-1474. Thr-1487 carries the phosphothreonine modification. Ser-1494 bears the Phosphoserine mark. Residues 1495–1525 (LTRSEHSHSTTLPRDYSTLTSVSSHDSRLTA) are disordered. Over residues 1503–1518 (STTLPRDYSTLTSVSS) the composition is skewed to polar residues. Phosphothreonine is present on Thr-1530. Fibronectin type-III domains lie at 1530–1625 (TPTR…VHPQ) and 1643–1739 (APGP…SQDG). Residue Ser-1791 is modified to Phosphoserine.

The protein belongs to the integrin beta chain family. Heterodimer of an alpha and a beta subunit. Beta-4 associates with alpha-6. Interacts (via cytoplasmic region) with COL17A1 (via cytoplasmic region). Interacts (via cytoplasmic region) with DST isoform 3 (via N-terminus). Isoform beta-4a interacts (via cytoplasmic domain) with DST (via N-terminus). Interacts with RAC1. ITGA6:ITGB4 is found in a ternary complex with NRG1 and ERBB3. ITGA6:ITGB4 is found in a ternary complex with IGF1 and IGF1R. ITGA6:ITGB4 interacts with IGF2. Interacts with TMEM268; this interaction prevents ITGB4 degradation. Palmitoylated by DHHC3 at several cysteines of the membrane-proximal region, enhancing stability and cell surface expression. Palmitoylation also promotes secondary association with tertaspanins. As to expression, integrin alpha-6/beta-4 is predominantly expressed by epithelia. Isoform beta-4D is also expressed in colon and placenta. Isoform beta-4E is also expressed in epidermis, lung, duodenum, heart, spleen and stomach.

It localises to the cell membrane. The protein localises to the cell junction. Its subcellular location is the hemidesmosome. Integrin alpha-6/beta-4 is a receptor for laminin. Plays a critical structural role in the hemidesmosome of epithelial cells. Is required for the regulation of keratinocyte polarity and motility. ITGA6:ITGB4 binds to NRG1 (via EGF domain) and this binding is essential for NRG1-ERBB signaling. ITGA6:ITGB4 binds to IGF1 and this binding is essential for IGF1 signaling. ITGA6:ITGB4 binds to IGF2 and this binding is essential for IGF2 signaling. The chain is Integrin beta-4 (ITGB4) from Homo sapiens (Human).